The following is a 692-amino-acid chain: Elongation factor G (692 aa).

A tr-type G domain is found at 8 to 283 (NRIRNIGIAA…AVIDYLPAPT (276 aa)). Residues 17–24 (AHIDAGKT), 81–85 (DTPGH), and 135–138 (NKMD) each bind GTP.

Belongs to the TRAFAC class translation factor GTPase superfamily. Classic translation factor GTPase family. EF-G/EF-2 subfamily.

It localises to the cytoplasm. Its function is as follows. Catalyzes the GTP-dependent ribosomal translocation step during translation elongation. During this step, the ribosome changes from the pre-translocational (PRE) to the post-translocational (POST) state as the newly formed A-site-bound peptidyl-tRNA and P-site-bound deacylated tRNA move to the P and E sites, respectively. Catalyzes the coordinated movement of the two tRNA molecules, the mRNA and conformational changes in the ribosome. In Helicobacter pylori (strain Shi470), this protein is Elongation factor G.